A 98-amino-acid chain; its full sequence is NADH-ubiquinone oxidoreductase chain 4L (98 aa).

3 helical membrane-spanning segments follow: residues Met-1–Leu-21, Ser-29–Leu-49, and Ile-61–Val-81.

Belongs to the complex I subunit 4L family. Core subunit of respiratory chain NADH dehydrogenase (Complex I) which is composed of 45 different subunits.

The protein localises to the mitochondrion inner membrane. It carries out the reaction a ubiquinone + NADH + 5 H(+)(in) = a ubiquinol + NAD(+) + 4 H(+)(out). Functionally, core subunit of the mitochondrial membrane respiratory chain NADH dehydrogenase (Complex I) which catalyzes electron transfer from NADH through the respiratory chain, using ubiquinone as an electron acceptor. Part of the enzyme membrane arm which is embedded in the lipid bilayer and involved in proton translocation. The polypeptide is NADH-ubiquinone oxidoreductase chain 4L (MT-ND4L) (Platyrrhinus brachycephalus (Short-headed broad-nosed bat)).